A 404-amino-acid polypeptide reads, in one-letter code: Ubiquitin-like modifier-activating enzyme 5 (404 aa).

Ser45 is modified (phosphoserine). Gly83, Asp104, Lys127, Asn150, and Asn184 together coordinate ATP. Zn(2+) is bound by residues Cys226 and Cys229. The Glycyl thioester intermediate role is filled by Cys250. The Zn(2+) site is built by Cys303 and Cys308. The UFM1-interacting sequence (UIS) motif lies at 334 to 346 (IIHEDNEWGIELV). The tract at residues 347–377 (SEISEEELKKSSGPIPDLPEGIIVAYTVPQK) is linker. 2 positions are modified to phosphoserine: Ser358 and Ser393. The UFC1-binding sequence (UFC) motif lies at 389–404 (DSGESLEDLMAKMKNI).

It belongs to the ubiquitin-activating E1 family. UBA5 subfamily. In terms of assembly, homodimer; homodimerization is required for UFM1 activation. Interacts (via UIS motif) with UFM1; binds UFM1 via a trans-binding mechanism in which UFM1 interacts with distinct sites in both subunits of the UBA5 homodimer. Interacts (via C-terminus) with UFC1. Interacts (via UIS motif) with GABARAPL2 and, with lower affinity, with GABARAP and GABARAPL1.

The protein resides in the cytoplasm. It is found in the nucleus. It localises to the endoplasmic reticulum membrane. The protein localises to the golgi apparatus. E1-like enzyme which specifically catalyzes the first step in ufmylation. Activates UFM1 by first adenylating its C-terminal glycine residue with ATP, and thereafter linking this residue to the side chain of a cysteine residue in E1, yielding a UFM1-E1 thioester and free AMP. Activates UFM1 via a trans-binding mechanism, in which UFM1 interacts with distinct sites in both subunits of the UBA5 homodimer. Trans-binding also promotes stabilization of the UBA5 homodimer, and enhances ATP-binding. Transfer of UFM1 from UBA5 to the E2-like enzyme UFC1 also takes place using a trans mechanism. Ufmylation plays a key role in various processes, such as ribosome recycling, response to DNA damage, interferon response or reticulophagy (also called ER-phagy). Ufmylation is essential for erythroid differentiation of both megakaryocytes and erythrocytes. In Bos taurus (Bovine), this protein is Ubiquitin-like modifier-activating enzyme 5.